A 264-amino-acid chain; its full sequence is 3'-5' ssDNA/RNA exonuclease TatD (264 aa).

Residues Glu-92, His-128, and His-153 each coordinate a divalent metal cation.

Belongs to the metallo-dependent hydrolases superfamily. TatD-type hydrolase family. TatD subfamily. In terms of assembly, monomer. Mg(2+) is required as a cofactor.

Its subcellular location is the cytoplasm. Its function is as follows. 3'-5' exonuclease that prefers single-stranded DNA and RNA. May play a role in the H(2)O(2)-induced DNA damage repair. In Musicola paradisiaca (strain Ech703) (Dickeya paradisiaca), this protein is 3'-5' ssDNA/RNA exonuclease TatD.